The sequence spans 534 residues: Serine protease vicPb (534 aa).

An N-terminal signal peptide occupies residues 1-17; that stretch reads MLRYLLIPILYLQVVLG. Residues N34, N65, and N126 are each glycosylated (N-linked (GlcNAc...) asparagine). S174 (charge relay system) is an active-site residue. N-linked (GlcNAc...) asparagine glycosylation is found at N297, N335, N352, N415, and N437. The Charge relay system role is filled by D451.

Belongs to the peptidase S28 family.

It participates in mycotoxin biosynthesis. Serine protease, part of the gene cluster that mediates the biosynthesis of the secondary metabolite victorin, the molecular basis for Victoria blight of oats. Within the pathway, vicPa and vicPb are probably involved in the processing of the vicA1 and vicA2 precursors. The pathway starts with the processing of the precursor vicA1 by several endopeptidases including kexin proteases as well as the cluster-specific S28 family peptidases vicPa and vicPb to produce 7 identical copies of the hexapeptide Gly-Leu-Lys-Leu-Ala-Phe. After being excised from the precursor peptide, the core peptides are cyclized and modified post-translationally by enzymes encoded within the gene cluster. The ustYa family oxidase vicYb is required for the formation of the macrocycle in victorin and the copper amine oxidases (CAOs) vicK1 and vicK2 are responsible for converting victorin to the active form by oxidizing the N-terminal glycyl residue in the peptides to glyoxylate. Relaxed substrate specificity of enzymes in the victorin biosynthetic pathway results in a metabolic grid that produces a set of analogs including victorinines B, C, E or HV-toxin M. This is Serine protease vicPb from Bipolaris victoriae (strain FI3) (Victoria blight of oats agent).